The primary structure comprises 141 residues: Large ribosomal subunit protein uL11 (141 aa).

This sequence belongs to the universal ribosomal protein uL11 family. In terms of assembly, part of the ribosomal stalk of the 50S ribosomal subunit. Interacts with L10 and the large rRNA to form the base of the stalk. L10 forms an elongated spine to which L12 dimers bind in a sequential fashion forming a multimeric L10(L12)X complex. In terms of processing, one or more lysine residues are methylated.

Forms part of the ribosomal stalk which helps the ribosome interact with GTP-bound translation factors. The chain is Large ribosomal subunit protein uL11 from Synechococcus sp. (strain JA-2-3B'a(2-13)) (Cyanobacteria bacterium Yellowstone B-Prime).